The chain runs to 209 residues: Na(+)-translocating NADH-quinone reductase subunit D (209 aa).

A run of 5 helical transmembrane segments spans residues 42-62 (VVMT…ISLI), 66-86 (IPNS…VIVV), 95-115 (FEIS…CIVM), 131-151 (FMDG…VGFL), and 178-198 (NGLF…IWAL).

Belongs to the NqrDE/RnfAE family. Composed of six subunits; NqrA, NqrB, NqrC, NqrD, NqrE and NqrF.

It is found in the cell inner membrane. It carries out the reaction a ubiquinone + n Na(+)(in) + NADH + H(+) = a ubiquinol + n Na(+)(out) + NAD(+). Functionally, NQR complex catalyzes the reduction of ubiquinone-1 to ubiquinol by two successive reactions, coupled with the transport of Na(+) ions from the cytoplasm to the periplasm. NqrA to NqrE are probably involved in the second step, the conversion of ubisemiquinone to ubiquinol. This Serratia proteamaculans (strain 568) protein is Na(+)-translocating NADH-quinone reductase subunit D.